Here is a 366-residue protein sequence, read N- to C-terminus: uncharacterized protein (366 aa).

It to B.subtilis XkdV.

This is an uncharacterized protein from Bacillus subtilis (strain 168).